The chain runs to 558 residues: Formate--tetrahydrofolate ligase (558 aa).

67–74 serves as a coordination point for ATP; that stretch reads TPAGEGKT.

Belongs to the formate--tetrahydrofolate ligase family.

The catalysed reaction is (6S)-5,6,7,8-tetrahydrofolate + formate + ATP = (6R)-10-formyltetrahydrofolate + ADP + phosphate. Its pathway is one-carbon metabolism; tetrahydrofolate interconversion. The sequence is that of Formate--tetrahydrofolate ligase from Sphingobium sp. (strain NBRC 103272 / SYK-6).